Here is an 896-residue protein sequence, read N- to C-terminus: Alanine--tRNA ligase (896 aa).

Residues 439 to 456 are compositionally biased toward basic and acidic residues; sequence QRAKDDAKAKKGQHRDAS. The segment at 439 to 459 is disordered; it reads QRAKDDAKAKKGQHRDASAYR. The Zn(2+) site is built by His-579, His-583, Cys-681, and His-685.

Belongs to the class-II aminoacyl-tRNA synthetase family. The cofactor is Zn(2+).

The protein resides in the cytoplasm. The enzyme catalyses tRNA(Ala) + L-alanine + ATP = L-alanyl-tRNA(Ala) + AMP + diphosphate. In terms of biological role, catalyzes the attachment of alanine to tRNA(Ala) in a two-step reaction: alanine is first activated by ATP to form Ala-AMP and then transferred to the acceptor end of tRNA(Ala). Also edits incorrectly charged Ser-tRNA(Ala) and Gly-tRNA(Ala) via its editing domain. The polypeptide is Alanine--tRNA ligase (Nocardioides sp. (strain ATCC BAA-499 / JS614)).